The chain runs to 476 residues: UDP-N-acetylmuramate--L-alanine ligase (476 aa).

Position 121 to 127 (121 to 127 (GAHGKTT)) interacts with ATP.

It belongs to the MurCDEF family.

It is found in the cytoplasm. The enzyme catalyses UDP-N-acetyl-alpha-D-muramate + L-alanine + ATP = UDP-N-acetyl-alpha-D-muramoyl-L-alanine + ADP + phosphate + H(+). Its pathway is cell wall biogenesis; peptidoglycan biosynthesis. In terms of biological role, cell wall formation. This chain is UDP-N-acetylmuramate--L-alanine ligase, found in Clavibacter sepedonicus (Clavibacter michiganensis subsp. sepedonicus).